The chain runs to 64 residues: Large ribosomal subunit protein bL35c (64 aa).

Belongs to the bacterial ribosomal protein bL35 family.

It is found in the plastid. It localises to the chloroplast. This Thalassiosira pseudonana (Marine diatom) protein is Large ribosomal subunit protein bL35c.